Here is a 393-residue protein sequence, read N- to C-terminus: Methylthioribose kinase (393 aa).

Residues N38, K53, and 107–109 (EDL) each bind ATP. D225 is a binding site for substrate. Residue 242 to 244 (DPE) coordinates ATP. Residue R332 coordinates substrate.

The protein belongs to the methylthioribose kinase family. As to quaternary structure, homodimer.

It carries out the reaction 5-(methylsulfanyl)-D-ribose + ATP = 5-(methylsulfanyl)-alpha-D-ribose 1-phosphate + ADP + H(+). It functions in the pathway amino-acid biosynthesis; L-methionine biosynthesis via salvage pathway; S-methyl-5-thio-alpha-D-ribose 1-phosphate from S-methyl-5'-thioadenosine (hydrolase route): step 2/2. Its function is as follows. Catalyzes the phosphorylation of methylthioribose into methylthioribose-1-phosphate. This Bacillus cereus (strain AH187) protein is Methylthioribose kinase.